Consider the following 362-residue polypeptide: Peptide chain release factor 1 (362 aa).

Q235 carries the N5-methylglutamine modification.

Belongs to the prokaryotic/mitochondrial release factor family. Post-translationally, methylated by PrmC. Methylation increases the termination efficiency of RF1.

It localises to the cytoplasm. Functionally, peptide chain release factor 1 directs the termination of translation in response to the peptide chain termination codons UAG and UAA. The protein is Peptide chain release factor 1 of Acinetobacter baumannii (strain ACICU).